The sequence spans 318 residues: DNA-directed RNA polymerase subunit alpha 2 (318 aa).

Residues 1-227 are alpha N-terminal domain (alpha-NTD); that stretch reads MALENLLHPT…NQLRNILDIE (227 aa). An alpha C-terminal domain (alpha-CTD) region spans residues 242–318; the sequence is INPILLKHVE…TLIENWPQDL (77 aa).

It belongs to the RNA polymerase alpha chain family. As to quaternary structure, homodimer. The RNAP catalytic core consists of 2 alpha, 1 beta, 1 beta' and 1 omega subunit. When a sigma factor is associated with the core the holoenzyme is formed, which can initiate transcription.

The enzyme catalyses RNA(n) + a ribonucleoside 5'-triphosphate = RNA(n+1) + diphosphate. In terms of biological role, DNA-dependent RNA polymerase catalyzes the transcription of DNA into RNA using the four ribonucleoside triphosphates as substrates. This chain is DNA-directed RNA polymerase subunit alpha 2, found in Francisella tularensis subsp. tularensis (strain FSC 198).